A 567-amino-acid polypeptide reads, in one-letter code: Potassium-transporting ATPase potassium-binding subunit (567 aa).

12 helical membrane passes run 3–23, 64–84, 136–156, 179–199, 220–240, 254–274, 285–305, 330–350, 374–394, 420–440, 488–508, and 527–547; these read MIGWLQIILFCVIIVALTKPL, LTYTVAMLLFHVGGFLVIYGV, GLTHQNFLSAATGIALAMALI, LYVLLPICVVYTLFLVWQGIP, VGPVASQVAIKMLGTNGGGFF, LSNFVQMLSIFALGAALTNVF, WAILAVMGVLFVAGVAVTYWA, FGLVASSLFAVITTAASCGAV, IIVGGVGAGLYGMLLFVVLAI, AMLAILVLPLMYLGWTAVGVV, LASAMFVGRFFMIVPAMAIAG, and GGLFVGLVVGVILIIGGLTFF.

It belongs to the KdpA family. The system is composed of three essential subunits: KdpA, KdpB and KdpC.

It localises to the cell inner membrane. Its function is as follows. Part of the high-affinity ATP-driven potassium transport (or Kdp) system, which catalyzes the hydrolysis of ATP coupled with the electrogenic transport of potassium into the cytoplasm. This subunit binds the periplasmic potassium ions and delivers the ions to the membrane domain of KdpB through an intramembrane tunnel. The sequence is that of Potassium-transporting ATPase potassium-binding subunit from Bradyrhizobium diazoefficiens (strain JCM 10833 / BCRC 13528 / IAM 13628 / NBRC 14792 / USDA 110).